Consider the following 1452-residue polypeptide: Pleiotropic drug resistance protein 1 (1452 aa).

The region spanning 152–425 (LNYLHILPNR…FEYMGFICPE (274 aa)) is the ABC transporter 1 domain. Position 185-192 (185-192 (GPPSSGKT)) interacts with ATP. One can recognise an ABC transmembrane type-2 1 domain in the interval 504–716 (LLKACTAREY…AQNAIAVNEF (213 aa)). 7 consecutive transmembrane segments (helical) span residues 521 to 541 (FVYI…MTLF), 554 to 574 (GAVF…NGFS), 609 to 629 (IPIT…VIGF), 640 to 660 (LLLL…MGAL), 664 to 684 (IIVA…MGGF), 694 to 714 (WWIW…IAVN), and 753 to 773 (IGAG…AVAL). The segment at 808-830 (LGKSSSEKGNDVRRSASSRSMSS) is disordered. Residues 812–821 (SSEKGNDVRR) are compositionally biased toward basic and acidic residues. The 253-residue stretch at 855 to 1107 (ITFDDIRYAV…HLIKYFEGID (253 aa)) folds into the ABC transporter 2 domain. 900–907 (GVSGAGKT) contacts ATP. Residues 1180-1394 (TQCMACFWKQ…TLYGLIASQF (215 aa)) form the ABC transmembrane type-2 2 domain. The next 7 helical transmembrane spans lie at 1199–1219 (YTAV…TIFW), 1239–1259 (YIAV…VIAI), 1287–1307 (LPYL…MIGF), 1314–1334 (FFWY…YGMM), 1344–1364 (IAAI…GFIV), 1375–1395 (WYYY…SQFG), and 1421–1441 (FVGY…FIFA).

It belongs to the ABC transporter superfamily. ABCG family. PDR (TC 3.A.1.205) subfamily. As to expression, expressed in root hypodermal passage cells. Expressed in stem tissues, particularly the vasculature and nodes adjacent to leaf axils.

The protein resides in the cell membrane. Cellular strigolactone (SL) transporter required for the exudation of SL from the root to the soil. The presence of SL in the vicinity of the roots is required for development of symbiotic interactions with arbuscular mycorrhizal fungi (AMF). Transports SL in the above ground tissues and is required for the control of shoot branching. SL regulates plant shoot architecture by inhibiting the outgrowth of axillary buds. Involved in the regulation of shootward and outward directional strigolactone transport in roots. Due to its polar localization in root cells, mediates directional shootward strigolactone transport, as well as localized outward directional transport for exudation to the soil. The polypeptide is Pleiotropic drug resistance protein 1 (Petunia hybrida (Petunia)).